The chain runs to 91 residues: DNA-binding protein HU (91 aa).

Belongs to the bacterial histone-like protein family.

Histone-like DNA-binding protein which is capable of wrapping DNA to stabilize it, and thus to prevent its denaturation under extreme environmental conditions. The chain is DNA-binding protein HU (hup) from Clostridium pasteurianum.